We begin with the raw amino-acid sequence, 41 residues long: Conotoxin Bu22 (41 aa).

Residues S1–R25 constitute a propeptide that is removed on maturation. 2 disulfides stabilise this stretch: C27–C33 and C28–C40.

It belongs to the conotoxin A superfamily. In terms of tissue distribution, expressed by the venom duct.

It is found in the secreted. The chain is Conotoxin Bu22 from Conus bullatus (Bubble cone).